Consider the following 127-residue polypeptide: Ribosome-binding factor A (127 aa).

This sequence belongs to the RbfA family. In terms of assembly, monomer. Binds 30S ribosomal subunits, but not 50S ribosomal subunits or 70S ribosomes.

The protein resides in the cytoplasm. Its function is as follows. One of several proteins that assist in the late maturation steps of the functional core of the 30S ribosomal subunit. Associates with free 30S ribosomal subunits (but not with 30S subunits that are part of 70S ribosomes or polysomes). Required for efficient processing of 16S rRNA. May interact with the 5'-terminal helix region of 16S rRNA. The protein is Ribosome-binding factor A of Chloroflexus aurantiacus (strain ATCC 29366 / DSM 635 / J-10-fl).